We begin with the raw amino-acid sequence, 213 residues long: Orotate phosphoribosyltransferase (213 aa).

Residue Lys26 coordinates 5-phospho-alpha-D-ribose 1-diphosphate. Residue 34-35 coordinates orotate; sequence FF. Residues 72–73, Arg99, Lys100, Lys103, His105, and 124–132 each bind 5-phospho-alpha-D-ribose 1-diphosphate; these read YK and DDVITAGTA. Orotate contacts are provided by Thr128 and Arg156.

Belongs to the purine/pyrimidine phosphoribosyltransferase family. PyrE subfamily. In terms of assembly, homodimer. Mg(2+) is required as a cofactor.

The catalysed reaction is orotidine 5'-phosphate + diphosphate = orotate + 5-phospho-alpha-D-ribose 1-diphosphate. The protein operates within pyrimidine metabolism; UMP biosynthesis via de novo pathway; UMP from orotate: step 1/2. Functionally, catalyzes the transfer of a ribosyl phosphate group from 5-phosphoribose 1-diphosphate to orotate, leading to the formation of orotidine monophosphate (OMP). The protein is Orotate phosphoribosyltransferase of Pseudomonas paraeruginosa (strain DSM 24068 / PA7) (Pseudomonas aeruginosa (strain PA7)).